The sequence spans 240 residues: tRNA (guanine-N(1)-)-methyltransferase (240 aa).

S-adenosyl-L-methionine is bound by residues Gly-110 and 129 to 134 (LGDFVL).

This sequence belongs to the RNA methyltransferase TrmD family. As to quaternary structure, homodimer.

The protein localises to the cytoplasm. The enzyme catalyses guanosine(37) in tRNA + S-adenosyl-L-methionine = N(1)-methylguanosine(37) in tRNA + S-adenosyl-L-homocysteine + H(+). Its function is as follows. Specifically methylates guanosine-37 in various tRNAs. This chain is tRNA (guanine-N(1)-)-methyltransferase, found in Clostridium botulinum (strain ATCC 19397 / Type A).